Here is a 526-residue protein sequence, read N- to C-terminus: 3-hydroxy-3-methylglutaryl-coenzyme A reductase 2 (526 aa).

Catalysis depends on charge relay system residues glutamate 193, lysine 325, and aspartate 401. The active-site Proton donor is the histidine 499. The disordered stretch occupies residues asparagine 503 to aspartate 526. Residues aspartate 514 to aspartate 526 show a composition bias toward polar residues.

Belongs to the HMG-CoA reductase family.

It catalyses the reaction (R)-mevalonate + 2 NADP(+) + CoA = (3S)-3-hydroxy-3-methylglutaryl-CoA + 2 NADPH + 2 H(+). The protein operates within metabolic intermediate biosynthesis; (R)-mevalonate biosynthesis; (R)-mevalonate from acetyl-CoA: step 3/3. In terms of biological role, this transmembrane glycoprotein is involved in the control of cholesterol biosynthesis. It is the rate-limiting enzyme of the sterol biosynthesis. This is 3-hydroxy-3-methylglutaryl-coenzyme A reductase 2 (hmgB) from Dictyostelium discoideum (Social amoeba).